The chain runs to 647 residues: Beta-glucosidase-like SFR2, chloroplastic (647 aa).

The disordered stretch occupies residues 116-140 (SAAGDGGSQQSWRSTGGENIGDREQ). The segment covering 123 to 132 (SQQSWRSTGG) has biased composition (polar residues). A glycan (N-linked (GlcNAc...) asparagine) is linked at Asn169. A beta-D-glucoside is bound by residues His258, 302-303 (NE), Tyr414, Glu466, Trp504, 511-512 (EW), and Phe520. The Proton donor role is filled by Glu303. The active-site Nucleophile is Glu466.

The protein belongs to the glycosyl hydrolase 1 family.

Its subcellular location is the plastid. It localises to the chloroplast outer membrane. The enzyme catalyses 2 a 1,2-diacyl-3-O-(beta-D-galactosyl)-sn-glycerol = a 1,2-diacyl-3-O-[beta-D-galactosyl-(1-&gt;6)-beta-D-galactosyl]-sn-glycerol + a 1,2-diacyl-sn-glycerol. In terms of biological role, galactosyltransferase synthesizing digalactosyldiacylglycerol from monogalactosyldiacylglycerol in the absence of UDP-galactose. Potentially involved in freezing tolerance. The chain is Beta-glucosidase-like SFR2, chloroplastic from Oryza sativa subsp. japonica (Rice).